The sequence spans 701 residues: Polyribonucleotide nucleotidyltransferase (701 aa).

Positions 490 and 496 each coordinate Mg(2+). One can recognise a KH domain in the interval 557-616; that stretch reads PKVVTMSINPDKIRDVIGPGGKKINEIIDETGVKLDIEQDGTIFIGAVDQAMINRAKEII. One can recognise an S1 motif domain in the interval 626–694; it reads GQVYHAKVKR…KQGRVNASHK (69 aa).

This sequence belongs to the polyribonucleotide nucleotidyltransferase family. The cofactor is Mg(2+).

Its subcellular location is the cytoplasm. The catalysed reaction is RNA(n+1) + phosphate = RNA(n) + a ribonucleoside 5'-diphosphate. In terms of biological role, involved in mRNA degradation. Catalyzes the phosphorolysis of single-stranded polyribonucleotides processively in the 3'- to 5'-direction. This is Polyribonucleotide nucleotidyltransferase from Staphylococcus epidermidis (strain ATCC 12228 / FDA PCI 1200).